The chain runs to 430 residues: Dihydroorotase (430 aa).

Positions 57 and 59 each coordinate Zn(2+). Substrate contacts are provided by residues His-59–Arg-61 and Asn-91. Zn(2+)-binding residues include Asp-151, His-178, and His-231. Asn-277 is a binding site for substrate. Asp-304 is a binding site for Zn(2+). The active site involves Asp-304. Substrate-binding positions include His-308 and Pro-322 to Gly-323.

It belongs to the metallo-dependent hydrolases superfamily. DHOase family. Class I DHOase subfamily. It depends on Zn(2+) as a cofactor.

It catalyses the reaction (S)-dihydroorotate + H2O = N-carbamoyl-L-aspartate + H(+). It functions in the pathway pyrimidine metabolism; UMP biosynthesis via de novo pathway; (S)-dihydroorotate from bicarbonate: step 3/3. In terms of biological role, catalyzes the reversible cyclization of carbamoyl aspartate to dihydroorotate. This is Dihydroorotase from Mycobacterium bovis (strain ATCC BAA-935 / AF2122/97).